Consider the following 115-residue polypeptide: Secreted RxLR effector protein 2 (115 aa).

Positions 1 to 22 are cleaved as a signal peptide; sequence MICRSPLIVVMLFVIAAHTVLA. The short motif at 57–82 is the RxLR-dEER element; that stretch reads RFLRQETTFEKKLGVNDVHAVHAEER.

It belongs to the RxLR effector family.

It is found in the secreted. The protein resides in the host cytoplasm. The protein localises to the host nucleus. Its function is as follows. Effector that acts as a broad suppressor of cell death to interrupt plant immunity. Inhibits cell death induced by cell death-inducing proteins, including the PAMP elicitor INF1 from P.infestans. This chain is Secreted RxLR effector protein 2, found in Plasmopara viticola (Downy mildew of grapevine).